The primary structure comprises 177 residues: Ribosome maturation factor RimM (177 aa).

In terms of domain architecture, PRC barrel spans 100-177; the sequence is EDEYYWSDLV…TVLVAWPSDY (78 aa).

Belongs to the RimM family. In terms of assembly, binds ribosomal protein uS19.

It is found in the cytoplasm. Its function is as follows. An accessory protein needed during the final step in the assembly of 30S ribosomal subunit, possibly for assembly of the head region. Essential for efficient processing of 16S rRNA. May be needed both before and after RbfA during the maturation of 16S rRNA. It has affinity for free ribosomal 30S subunits but not for 70S ribosomes. The chain is Ribosome maturation factor RimM from Psychrobacter cryohalolentis (strain ATCC BAA-1226 / DSM 17306 / VKM B-2378 / K5).